Here is a 20-residue protein sequence, read N- to C-terminus: Cytochrome c oxidase subunit 6A1, mitochondrial (20 aa).

This sequence belongs to the cytochrome c oxidase subunit 6A family. In terms of assembly, component of the cytochrome c oxidase (complex IV, CIV), a multisubunit enzyme composed of 14 subunits. The complex is composed of a catalytic core of 3 subunits MT-CO1, MT-CO2 and MT-CO3, encoded in the mitochondrial DNA, and 11 supernumerary subunits COX4I, COX5A, COX5B, COX6A, COX6B, COX6C, COX7A, COX7B, COX7C, COX8 and NDUFA4, which are encoded in the nuclear genome. The complex exists as a monomer or a dimer and forms supercomplexes (SCs) in the inner mitochondrial membrane with NADH-ubiquinone oxidoreductase (complex I, CI) and ubiquinol-cytochrome c oxidoreductase (cytochrome b-c1 complex, complex III, CIII), resulting in different assemblies (supercomplex SCI(1)III(2)IV(1) and megacomplex MCI(2)III(2)IV(2)). Liver specific isoform.

The protein resides in the mitochondrion inner membrane. The protein operates within energy metabolism; oxidative phosphorylation. Its function is as follows. Component of the cytochrome c oxidase, the last enzyme in the mitochondrial electron transport chain which drives oxidative phosphorylation. The respiratory chain contains 3 multisubunit complexes succinate dehydrogenase (complex II, CII), ubiquinol-cytochrome c oxidoreductase (cytochrome b-c1 complex, complex III, CIII) and cytochrome c oxidase (complex IV, CIV), that cooperate to transfer electrons derived from NADH and succinate to molecular oxygen, creating an electrochemical gradient over the inner membrane that drives transmembrane transport and the ATP synthase. Cytochrome c oxidase is the component of the respiratory chain that catalyzes the reduction of oxygen to water. Electrons originating from reduced cytochrome c in the intermembrane space (IMS) are transferred via the dinuclear copper A center (CU(A)) of subunit 2 and heme A of subunit 1 to the active site in subunit 1, a binuclear center (BNC) formed by heme A3 and copper B (CU(B)). The BNC reduces molecular oxygen to 2 water molecules unsing 4 electrons from cytochrome c in the IMS and 4 protons from the mitochondrial matrix. This Canis lupus familiaris (Dog) protein is Cytochrome c oxidase subunit 6A1, mitochondrial (COX6A1).